The chain runs to 179 residues: Large ribosomal subunit protein uL6 (179 aa).

Belongs to the universal ribosomal protein uL6 family. Part of the 50S ribosomal subunit.

In terms of biological role, this protein binds to the 23S rRNA, and is important in its secondary structure. It is located near the subunit interface in the base of the L7/L12 stalk, and near the tRNA binding site of the peptidyltransferase center. This chain is Large ribosomal subunit protein uL6, found in Prochlorococcus marinus (strain SARG / CCMP1375 / SS120).